The chain runs to 146 residues: Probable gamma-secretase subunit PEN-2 (146 aa).

Positions 1–26 are disordered; it reads MEATRSDDPSLNPIRNRNPNPNPNPN. Topologically, residues 1 to 61 are lumenal; the sequence is MEATRSDDPS…SVDYARRFYK (61 aa). Low complexity predominate over residues 9 to 19; the sequence is PSLNPIRNRNP. Residues 62–82 traverse the membrane as a helical segment; that stretch reads FGFALLPWLWFVNCFYFWPVL. The Cytoplasmic portion of the chain corresponds to 83-98; sequence RHSRAFPQIRNYVVRS. The helical transmembrane segment at 99-119 threads the bilayer; it reads AIGFSVFTALLSAWALTFSIG. At 120–146 the chain is on the lumenal side; that stretch reads GEQLFGPLYDKLVMYNVADRLGLSGLA.

This sequence belongs to the PEN-2 family. Probable component of the gamma-secretase complex, a complex composed of a presenilin homodimer, nicastrin, APH1 and PEN2.

Its subcellular location is the membrane. In terms of biological role, probable subunit of the gamma-secretase complex, an endoprotease complex that catalyzes the intramembrane cleavage of integral membrane proteins such as Notch receptors. In Arabidopsis thaliana (Mouse-ear cress), this protein is Probable gamma-secretase subunit PEN-2.